A 323-amino-acid polypeptide reads, in one-letter code: Cysteine synthase A (323 aa).

Hydrogen sulfide contacts are provided by N8 and R35. K42 carries the N6-(pyridoxal phosphate)lysine modification. Pyridoxal 5'-phosphate contacts are provided by residues N72 and 177 to 181; that span reads GTGGT. L269 contacts hydrogen sulfide. S273 provides a ligand contact to pyridoxal 5'-phosphate.

It belongs to the cysteine synthase/cystathionine beta-synthase family. As to quaternary structure, homodimer. Pyridoxal 5'-phosphate is required as a cofactor.

The enzyme catalyses O-acetyl-L-serine + hydrogen sulfide = L-cysteine + acetate. It participates in amino-acid biosynthesis; L-cysteine biosynthesis; L-cysteine from L-serine: step 2/2. This Escherichia coli O157:H7 protein is Cysteine synthase A (cysK).